Reading from the N-terminus, the 130-residue chain is Large ribosomal subunit protein uL14 (130 aa).

This sequence belongs to the universal ribosomal protein uL14 family. As to quaternary structure, part of the 50S ribosomal subunit. Forms a cluster with proteins L3 and L19. In the 70S ribosome, L14 and L19 interact and together make contacts with the 16S rRNA in bridges B5 and B8.

In terms of biological role, binds to 23S rRNA. Forms part of two intersubunit bridges in the 70S ribosome. This chain is Large ribosomal subunit protein uL14, found in Leptospira interrogans serogroup Icterohaemorrhagiae serovar copenhageni (strain Fiocruz L1-130).